A 601-amino-acid chain; its full sequence is Potassium-transporting ATPase potassium-binding subunit (601 aa).

12 helical membrane passes run 3–23 (ASAW…AWPL), 62–82 (HYAL…YALQ), 132–152 (LGLS…AFAL), 179–199 (AWVL…QGVI), 283–303 (LTNL…CFAF), 314–334 (VAIL…VTAA), 367–387 (FGIS…CGAV), 397–417 (LGGM…GGAG), 419–439 (GLYG…LMIG), 459–479 (VAIL…VLAP), 523–543 (VLLA…VLAI), and 564–584 (GPLF…LNYV).

Belongs to the KdpA family. In terms of assembly, the system is composed of three essential subunits: KdpA, KdpB and KdpC.

It localises to the cell inner membrane. In terms of biological role, part of the high-affinity ATP-driven potassium transport (or Kdp) system, which catalyzes the hydrolysis of ATP coupled with the electrogenic transport of potassium into the cytoplasm. This subunit binds the periplasmic potassium ions and delivers the ions to the membrane domain of KdpB through an intramembrane tunnel. In Paracidovorax citrulli (strain AAC00-1) (Acidovorax citrulli), this protein is Potassium-transporting ATPase potassium-binding subunit.